The primary structure comprises 422 residues: Gamma-glutamyl phosphate reductase (422 aa).

This sequence belongs to the gamma-glutamyl phosphate reductase family.

The protein localises to the cytoplasm. It catalyses the reaction L-glutamate 5-semialdehyde + phosphate + NADP(+) = L-glutamyl 5-phosphate + NADPH + H(+). Its pathway is amino-acid biosynthesis; L-proline biosynthesis; L-glutamate 5-semialdehyde from L-glutamate: step 2/2. Its function is as follows. Catalyzes the NADPH-dependent reduction of L-glutamate 5-phosphate into L-glutamate 5-semialdehyde and phosphate. The product spontaneously undergoes cyclization to form 1-pyrroline-5-carboxylate. This Saccharophagus degradans (strain 2-40 / ATCC 43961 / DSM 17024) protein is Gamma-glutamyl phosphate reductase.